The primary structure comprises 1280 residues: Fibronectin type III domain-containing protein (1280 aa).

Residues 1-19 (MWQILLAISIFSLSKLSNA) form the signal peptide. Residues 20 to 1156 (QQQPKVAPPQ…RVSTPIYQSA (1137 aa)) lie on the Extracellular side of the membrane. Cystine bridges form between Cys-58-Cys-111, Cys-268-Cys-321, Cys-369-Cys-417, Cys-460-Cys-511, and Cys-553-Cys-604. Fibronectin type-III domains follow at residues 628–722 (PFPP…TGSF), 730–824 (PEKW…VKQF), 830–933 (PTGK…VAAD), 939–1033 (PGPP…TEKT), and 1039–1131 (PAKP…PASD). Residues 1118 to 1130 (YPSQENPQESPAS) show a composition bias toward polar residues. The tract at residues 1118 to 1144 (YPSQENPQESPASDITEARPRPGISNV) is disordered. The chain crosses the membrane as a helical span at residues 1157 to 1177 (WFIALLVLIALLLLVLLTFVL). Residues 1178–1280 (YTRHQGAKYL…KDPSSLATFV (103 aa)) are Cytoplasmic-facing. The disordered stretch occupies residues 1206–1280 (DEEEGSFSNN…KDPSSLATFV (75 aa)). Positions 1262-1273 (DEKKAPPEEKDP) are enriched in basic and acidic residues.

As to expression, component of the acid-insoluble organic matrix of the aragonitic skeleton (at protein level).

Its subcellular location is the membrane. The polypeptide is Fibronectin type III domain-containing protein (Acropora millepora (Staghorn coral)).